We begin with the raw amino-acid sequence, 204 residues long: UPF0301 protein Mflv_0850 (204 aa).

This sequence belongs to the UPF0301 (AlgH) family.

The sequence is that of UPF0301 protein Mflv_0850 from Mycolicibacterium gilvum (strain PYR-GCK) (Mycobacterium gilvum (strain PYR-GCK)).